Reading from the N-terminus, the 353-residue chain is Glycerol-3-phosphate dehydrogenase [NAD(P)+] (353 aa).

Residues tryptophan 11, arginine 40, and lysine 115 each coordinate NADPH. Lysine 115, glycine 156, and serine 158 together coordinate sn-glycerol 3-phosphate. Alanine 160 serves as a coordination point for NADPH. Residues lysine 211, aspartate 264, serine 274, arginine 275, and asparagine 276 each coordinate sn-glycerol 3-phosphate. The active-site Proton acceptor is lysine 211. Arginine 275 is an NADPH binding site. NADPH-binding residues include valine 299 and glutamate 301.

Belongs to the NAD-dependent glycerol-3-phosphate dehydrogenase family.

Its subcellular location is the cytoplasm. The enzyme catalyses sn-glycerol 3-phosphate + NAD(+) = dihydroxyacetone phosphate + NADH + H(+). It carries out the reaction sn-glycerol 3-phosphate + NADP(+) = dihydroxyacetone phosphate + NADPH + H(+). It functions in the pathway membrane lipid metabolism; glycerophospholipid metabolism. Functionally, catalyzes the reduction of the glycolytic intermediate dihydroxyacetone phosphate (DHAP) to sn-glycerol 3-phosphate (G3P), the key precursor for phospholipid synthesis. This Polaromonas sp. (strain JS666 / ATCC BAA-500) protein is Glycerol-3-phosphate dehydrogenase [NAD(P)+].